A 1073-amino-acid polypeptide reads, in one-letter code: Probable cellulose synthase A catalytic subunit 2 [UDP-forming] (1073 aa).

Residues 1-270 lie on the Cytoplasmic side of the membrane; that stretch reads MDGAKSGKQC…SSSRINPYRM (270 aa). Zn(2+) contacts are provided by C13, C16, C32, C35, C40, C43, C55, and C58. Residues 13–59 form an RING-type; degenerate zinc finger; that stretch reads CQICGDGVGTAADGELFTACDVCGFPVCRPCYEYERKDGSQACPQCK. A disordered region spans residues 66-98; that stretch reads KGSPPILGDESDDVDADDASDVNYPTSGNQDHK. The segment covering 74-85 has biased composition (acidic residues); the sequence is DESDDVDADDAS. Residues 271–291 form a helical membrane-spanning segment; sequence VIVLRLIVLCIFLHYRITNPV. The Extracellular segment spans residues 292–293; it reads RN. Residues 294 to 314 traverse the membrane as a helical segment; it reads AYPLWLLSVICEIWFALSWIL. Residues 315 to 856 lie on the Cytoplasmic side of the membrane; sequence DQFPKWSPIN…INTTIYPLTS (542 aa). Residues S353, K359, E360, and D389 each contribute to the UDP-alpha-D-glucose site. D389 is a catalytic residue. Residues 443–470 are a coiled coil; the sequence is VKDRRAMKREYEEFKVRVNALVAKAQKV. K530 is a UDP-alpha-D-glucose binding site. Mn(2+) contacts are provided by K531 and D555. The segment at 655–676 is disordered; it reads GGRKKTKKSKEKSTEKKKSHKH. Residue D773 is part of the active site. Residues 857-877 form a helical membrane-spanning segment; it reads IPLLLYCILPAICLLTGKFII. The Extracellular portion of the chain corresponds to 878 to 882; it reads PEISN. Residues 883–903 form a helical membrane-spanning segment; it reads FASIWFISLFLSIFATGILEM. Residues 904 to 918 lie on the Cytoplasmic side of the membrane; the sequence is RWSGVGIDEWWRNEQ. The helical transmembrane segment at 919–939 threads the bilayer; the sequence is FWVIGGISAHLFAVFQGLLKV. The Extracellular segment spans residues 940 to 969; sequence LAGIDTSFTVTSKASDEEGDFAELYMFKWT. A helical membrane pass occupies residues 970–990; sequence TLLIPPTTILIINLVGVVAGI. The Cytoplasmic segment spans residues 991–1001; the sequence is SYAINSGYQSW. The helical transmembrane segment at 1002–1022 threads the bilayer; the sequence is GPLFGKLFFAFWVIVHLYPFL. Topologically, residues 1023–1031 are extracellular; the sequence is KGLMGRQNR. Residues 1032–1052 form a helical membrane-spanning segment; the sequence is TPTIVVVWAILLASIFSLLWV. Residues 1053-1073 lie on the Cytoplasmic side of the membrane; sequence RIDPFTTRVTGPDTQKCGINC.

This sequence belongs to the glycosyltransferase 2 family. Plant cellulose synthase subfamily. Mn(2+) is required as a cofactor. Zn(2+) serves as cofactor.

The protein resides in the cell membrane. It carries out the reaction [(1-&gt;4)-beta-D-glucosyl](n) + UDP-alpha-D-glucose = [(1-&gt;4)-beta-D-glucosyl](n+1) + UDP + H(+). It functions in the pathway glycan metabolism; plant cellulose biosynthesis. Probable catalytic subunit of cellulose synthase terminal complexes ('rosettes'), required for beta-1,4-glucan microfibril crystallization, a major mechanism of the cell wall formation. The polypeptide is Probable cellulose synthase A catalytic subunit 2 [UDP-forming] (CESA2) (Oryza sativa subsp. japonica (Rice)).